Consider the following 828-residue polypeptide: Transcription factor SOX-6 (828 aa).

The disordered stretch occupies residues 1 to 51 (MSSKQATSPFACAADGEDAMTQDLTSREKEEGSDQHVASHLPLHPIMHNKP). Positions 25–34 (TSREKEEGSD) are enriched in basic and acidic residues. Position 119 is a phosphothreonine (threonine 119). Positions 184–262 (LAEKERQLST…LLQQQIQVQG (79 aa)) form a coiled coil. Positions 380–470 (SPGAKMPSTP…KSSIPSPIGG (91 aa)) are disordered. The segment covering 393-402 (NTAGTVSPTG) has biased composition (polar residues). Residue serine 399 is modified to Phosphoserine. A Phosphothreonine modification is found at threonine 401. Residues lysine 404 and lysine 417 each participate in a glycyl lysine isopeptide (Lys-Gly) (interchain with G-Cter in SUMO) cross-link. A phosphoserine mark is found at serine 439 and serine 442. A compositionally biased stretch (polar residues) spans 439–461 (SPTSPTQNLFPASKTSPVNLPNK). Positions 621-689 (IKRPMNAFMV…IHLEKYPNYK (69 aa)) form a DNA-binding region, HMG box. Over residues 753-781 (TPSPQMTSDCSSTSASPEPSLPVIQSTYG) the composition is skewed to polar residues. A disordered region spans residues 753–828 (TPSPQMTSDC…NEAPEAVSAN (76 aa)). Over residues 796 to 809 (NGEDEMEMYDDYED) the composition is skewed to acidic residues.

As to quaternary structure, homodimer. Interacts with DAZAP2. May interact with CENPK. In terms of processing, sumoylation inhibits the transcriptional activity. As to expression, expressed in a wide variety of tissues, most abundantly in skeletal musclen.

It is found in the nucleus. The protein localises to the cytoplasm. Transcription factor that plays a key role in several developmental processes, including neurogenesis, chondrocytes differentiation and cartilage formation. Specifically binds the 5'-AACAAT-3' DNA motif present in enhancers and super-enhancers and promotes expression of genes important for chondrogenesis. Required for overt chondrogenesis when condensed prechondrocytes differentiate into early stage chondrocytes: SOX5 and SOX6 cooperatively bind with SOX9 on active enhancers and super-enhancers associated with cartilage-specific genes, and thereby potentiate SOX9's ability to transactivate. Not involved in precartilaginous condensation, the first step in chondrogenesis, during which skeletal progenitors differentiate into prechondrocytes. Together with SOX5, required to form and maintain a pool of highly proliferating chondroblasts between epiphyses and metaphyses, to form columnar chondroblasts, delay chondrocyte prehypertrophy but promote hypertrophy, and to delay terminal differentiation of chondrocytes on contact with ossification fronts. Binds to the proximal promoter region of the myelin protein MPZ gene, and is thereby involved in the differentiation of oligodendroglia in the developing spinal tube. Binds to the gene promoter of MBP and acts as a transcriptional repressor. The sequence is that of Transcription factor SOX-6 from Homo sapiens (Human).